Here is a 343-residue protein sequence, read N- to C-terminus: Holliday junction branch migration complex subunit RuvB (343 aa).

Residues 1-182 (MTDPIPLHTP…FGIPVRLNFY (182 aa)) form a large ATPase domain (RuvB-L) region. ATP is bound by residues L21, R22, G63, K66, T67, T68, R172, Y182, and R219. Residue T67 participates in Mg(2+) binding. The small ATPAse domain (RuvB-S) stretch occupies residues 183–253 (TEEELEKVVT…IADAALTRLE (71 aa)). The interval 256 to 343 (GLGLDAMDRR…SQTGLFDGKS (88 aa)) is head domain (RuvB-H). 3 residues coordinate DNA: R292, R311, and R316.

Belongs to the RuvB family. Homohexamer. Forms an RuvA(8)-RuvB(12)-Holliday junction (HJ) complex. HJ DNA is sandwiched between 2 RuvA tetramers; dsDNA enters through RuvA and exits via RuvB. An RuvB hexamer assembles on each DNA strand where it exits the tetramer. Each RuvB hexamer is contacted by two RuvA subunits (via domain III) on 2 adjacent RuvB subunits; this complex drives branch migration. In the full resolvosome a probable DNA-RuvA(4)-RuvB(12)-RuvC(2) complex forms which resolves the HJ.

Its subcellular location is the cytoplasm. The enzyme catalyses ATP + H2O = ADP + phosphate + H(+). The RuvA-RuvB-RuvC complex processes Holliday junction (HJ) DNA during genetic recombination and DNA repair, while the RuvA-RuvB complex plays an important role in the rescue of blocked DNA replication forks via replication fork reversal (RFR). RuvA specifically binds to HJ cruciform DNA, conferring on it an open structure. The RuvB hexamer acts as an ATP-dependent pump, pulling dsDNA into and through the RuvAB complex. RuvB forms 2 homohexamers on either side of HJ DNA bound by 1 or 2 RuvA tetramers; 4 subunits per hexamer contact DNA at a time. Coordinated motions by a converter formed by DNA-disengaged RuvB subunits stimulates ATP hydrolysis and nucleotide exchange. Immobilization of the converter enables RuvB to convert the ATP-contained energy into a lever motion, pulling 2 nucleotides of DNA out of the RuvA tetramer per ATP hydrolyzed, thus driving DNA branch migration. The RuvB motors rotate together with the DNA substrate, which together with the progressing nucleotide cycle form the mechanistic basis for DNA recombination by continuous HJ branch migration. Branch migration allows RuvC to scan DNA until it finds its consensus sequence, where it cleaves and resolves cruciform DNA. This is Holliday junction branch migration complex subunit RuvB from Erythrobacter litoralis (strain HTCC2594).